Here is a 411-residue protein sequence, read N- to C-terminus: Arginine deiminase (411 aa).

Catalysis depends on Cys401, which acts as the Amidino-cysteine intermediate.

This sequence belongs to the arginine deiminase family.

The protein resides in the cytoplasm. It carries out the reaction L-arginine + H2O = L-citrulline + NH4(+). Its pathway is amino-acid degradation; L-arginine degradation via ADI pathway; carbamoyl phosphate from L-arginine: step 1/2. In Streptococcus equi subsp. zooepidemicus (strain H70), this protein is Arginine deiminase.